Here is a 251-residue protein sequence, read N- to C-terminus: Transcription initiation factor TFIID subunit 9B (251 aa).

Met1 is modified (N-acetylmethionine). Ser147 carries the phosphoserine modification. Thr159 and Thr174 each carry phosphothreonine. Phosphoserine is present on Ser177. Residues 229–251 are disordered; the sequence is QNTANEANPLKRKHEDDDDNDIM.

The protein belongs to the TAF9 family. As to quaternary structure, binds TAF5 and TAF6. Component of TFIID and the TATA-binding protein-free TAF complex (TFTC). TFIID is composed of TATA binding protein (TBP) and a number of TBP-associated factors (TAFs). Binds N-terminal domain of p53/TP53 which is essential for transcription.

It localises to the nucleus. Essential for cell viability. TAF9 and TAF9B are involved in transcriptional activation as well as repression of distinct but overlapping sets of genes. May have a role in gene regulation associated with apoptosis. TAFs are components of the transcription factor IID (TFIID) complex, the TBP-free TAFII complex (TFTC), the PCAF histone acetylase complex and the STAGA transcription coactivator-HAT complex. TFIID or TFTC are essential for the regulation of RNA polymerase II-mediated transcription. This is Transcription initiation factor TFIID subunit 9B (TAF9B) from Homo sapiens (Human).